The chain runs to 456 residues: Bifunctional protein GlmU (456 aa).

The tract at residues 1–229 is pyrophosphorylase; sequence MLNNAMSVVI…LSEVEGVNNR (229 aa). Residues 11–14, Lys-25, Gln-76, 81–82, 103–105, Gly-140, Glu-154, Asn-169, and Asn-227 contribute to the UDP-N-acetyl-alpha-D-glucosamine site; these read LAAG, GT, and YGD. Mg(2+) is bound at residue Asp-105. Residue Asn-227 participates in Mg(2+) binding. Positions 230–250 are linker; the sequence is LQLSRLERVYQFEQAEKLLLA. Positions 251-456 are N-acetyltransferase; sequence GVMLRDPARF…EGWRRPVKKK (206 aa). Residues Arg-333 and Lys-351 each contribute to the UDP-N-acetyl-alpha-D-glucosamine site. His-363 functions as the Proton acceptor in the catalytic mechanism. Residues Tyr-366 and Asn-377 each coordinate UDP-N-acetyl-alpha-D-glucosamine. Residues Ala-380, 386 to 387, Ser-405, Ala-423, and Arg-440 contribute to the acetyl-CoA site; that span reads NY.

It in the N-terminal section; belongs to the N-acetylglucosamine-1-phosphate uridyltransferase family. This sequence in the C-terminal section; belongs to the transferase hexapeptide repeat family. Homotrimer. Mg(2+) is required as a cofactor.

Its subcellular location is the cytoplasm. The catalysed reaction is alpha-D-glucosamine 1-phosphate + acetyl-CoA = N-acetyl-alpha-D-glucosamine 1-phosphate + CoA + H(+). The enzyme catalyses N-acetyl-alpha-D-glucosamine 1-phosphate + UTP + H(+) = UDP-N-acetyl-alpha-D-glucosamine + diphosphate. The protein operates within nucleotide-sugar biosynthesis; UDP-N-acetyl-alpha-D-glucosamine biosynthesis; N-acetyl-alpha-D-glucosamine 1-phosphate from alpha-D-glucosamine 6-phosphate (route II): step 2/2. It functions in the pathway nucleotide-sugar biosynthesis; UDP-N-acetyl-alpha-D-glucosamine biosynthesis; UDP-N-acetyl-alpha-D-glucosamine from N-acetyl-alpha-D-glucosamine 1-phosphate: step 1/1. It participates in bacterial outer membrane biogenesis; LPS lipid A biosynthesis. Catalyzes the last two sequential reactions in the de novo biosynthetic pathway for UDP-N-acetylglucosamine (UDP-GlcNAc). The C-terminal domain catalyzes the transfer of acetyl group from acetyl coenzyme A to glucosamine-1-phosphate (GlcN-1-P) to produce N-acetylglucosamine-1-phosphate (GlcNAc-1-P), which is converted into UDP-GlcNAc by the transfer of uridine 5-monophosphate (from uridine 5-triphosphate), a reaction catalyzed by the N-terminal domain. The chain is Bifunctional protein GlmU from Escherichia coli O7:K1 (strain IAI39 / ExPEC).